A 228-amino-acid chain; its full sequence is MNLTLFDQFSSPNILAIPLMTISLLMLTIIFPMKHNRLLTNRLLSIQSKMIHIFTKQLMLPIPKSGHHWALILTSLMTLLLTSNLLGLLPYTFTPTTQLSMNLGFALPMWLATLLIGLRNQPTMSLAHLLPEGTPTPLIPTLILIESISLMIRPLALGVRISANLTAGHLLMQLTSSATLSLSSMPTLSFMTAILLFLLTILEMAVAMIQALVFVLLLSLYLQENTHN.

A run of 5 helical transmembrane segments spans residues 13–33 (NILAIPLMTISLLMLTIIFPM), 69–89 (WALILTSLMTLLLTSNLLGLL), 98–118 (QLSMNLGFALPMWLATLLIGL), 139–159 (IPTLILIESISLMIRPLALGV), and 194–214 (ILLFLLTILEMAVAMIQALVF).

This sequence belongs to the ATPase A chain family. In terms of assembly, component of the ATP synthase complex composed at least of ATP5F1A/subunit alpha, ATP5F1B/subunit beta, ATP5MC1/subunit c (homooctomer), MT-ATP6/subunit a, MT-ATP8/subunit 8, ATP5ME/subunit e, ATP5MF/subunit f, ATP5MG/subunit g, ATP5MK/subunit k, ATP5MJ/subunit j, ATP5F1C/subunit gamma, ATP5F1D/subunit delta, ATP5F1E/subunit epsilon, ATP5PF/subunit F6, ATP5PB/subunit b, ATP5PD/subunit d, ATP5PO/subunit OSCP. ATP synthase complex consists of a soluble F(1) head domain (subunits alpha(3) and beta(3)) - the catalytic core - and a membrane F(0) domain - the membrane proton channel (subunits c, a, 8, e, f, g, k and j). These two domains are linked by a central stalk (subunits gamma, delta, and epsilon) rotating inside the F1 region and a stationary peripheral stalk (subunits F6, b, d, and OSCP). Interacts with DNAJC30; interaction is direct.

The protein localises to the mitochondrion inner membrane. It carries out the reaction H(+)(in) = H(+)(out). In terms of biological role, subunit a, of the mitochondrial membrane ATP synthase complex (F(1)F(0) ATP synthase or Complex V) that produces ATP from ADP in the presence of a proton gradient across the membrane which is generated by electron transport complexes of the respiratory chain. ATP synthase complex consist of a soluble F(1) head domain - the catalytic core - and a membrane F(1) domain - the membrane proton channel. These two domains are linked by a central stalk rotating inside the F(1) region and a stationary peripheral stalk. During catalysis, ATP synthesis in the catalytic domain of F(1) is coupled via a rotary mechanism of the central stalk subunits to proton translocation. With the subunit c (ATP5MC1), forms the proton-conducting channel in the F(0) domain, that contains two crucial half-channels (inlet and outlet) that facilitate proton movement from the mitochondrial intermembrane space (IMS) into the matrix. Protons are taken up via the inlet half-channel and released through the outlet half-channel, following a Grotthuss mechanism. The sequence is that of ATP synthase F(0) complex subunit a from Pelomedusa subrufa (African side-necked turtle).